Reading from the N-terminus, the 160-residue chain is Single-stranded DNA-binding protein 2 (160 aa).

In terms of domain architecture, SSB spans 2–104 (MNRVVLVGRL…VVAESVQFLE (103 aa)). The disordered stretch occupies residues 107–160 (NNNVEGATSNNYQNKANYSNNNQTSSYRADTSQKSDSFASEGKPIDINEDDLPF). The segment covering 115–129 (SNNYQNKANYSNNNQ) has biased composition (low complexity). Residues 130–144 (TSSYRADTSQKSDSF) are compositionally biased toward polar residues. An Important for interaction with partner proteins motif is present at residues 155-160 (EDDLPF).

As to quaternary structure, homotetramer.

Its function is as follows. Plays an important role in DNA replication, recombination and repair. Binds to ssDNA and to an array of partner proteins to recruit them to their sites of action during DNA metabolism. The polypeptide is Single-stranded DNA-binding protein 2 (ssb2) (Listeria monocytogenes serovar 1/2a (strain ATCC BAA-679 / EGD-e)).